Consider the following 388-residue polypeptide: LIM/homeobox protein Lhx9 (388 aa).

LIM zinc-binding domains lie at 69–130 and 131–193; these read ISDR…CHLG and ISAS…LSYT. Disordered regions lie at residues 239 to 263, 321 to 356, and 369 to 388; these read ENEA…RMRT, ENGG…LTDL, and SNMD…TNLF. Positions 267-326 form a DNA-binding region, homeobox; that stretch reads HHQLRTMKSYFAINHNPDAKDLKQLAQKTGLTKRVLQVWFQNARAKFRRNLLRQENGGVD. The span at 344–356 shows a compositional bias: low complexity; the sequence is LTPPGTATTLTDL. A compositionally biased stretch (polar residues) spans 376–388; the sequence is SGSPSQTTLTNLF.

As to quaternary structure, interacts with LDB1 and LDB2.

It is found in the nucleus. Its function is as follows. Involved in gonadal development. This Rattus norvegicus (Rat) protein is LIM/homeobox protein Lhx9 (Lhx9).